A 258-amino-acid chain; its full sequence is Shikimate dehydrogenase (NADP(+)) (258 aa).

Shikimate contacts are provided by residues 14–16 (SES) and Thr61. The active-site Proton acceptor is the Lys65. Residues Asn86 and Asp101 each contribute to the shikimate site. NADP(+) contacts are provided by residues 125–129 (GSGGS) and Leu211. A shikimate-binding site is contributed by Tyr213. NADP(+) is bound at residue Gly234.

The protein belongs to the shikimate dehydrogenase family. Homodimer.

It carries out the reaction shikimate + NADP(+) = 3-dehydroshikimate + NADPH + H(+). It functions in the pathway metabolic intermediate biosynthesis; chorismate biosynthesis; chorismate from D-erythrose 4-phosphate and phosphoenolpyruvate: step 4/7. Functionally, involved in the biosynthesis of the chorismate, which leads to the biosynthesis of aromatic amino acids. Catalyzes the reversible NADPH linked reduction of 3-dehydroshikimate (DHSA) to yield shikimate (SA). The polypeptide is Shikimate dehydrogenase (NADP(+)) (Clostridium botulinum (strain 657 / Type Ba4)).